The following is a 359-amino-acid chain: Oplophorus-luciferin 2-monooxygenase non-catalytic subunit (359 aa).

Residues 1–39 form the signal peptide; sequence MAVNFKFSLLTITIVVNILVYCNASAIKFDVDLEKVPSN. LRR repeat units follow at residues 135-158, 160-180, 181-203, 228-251, 255-278, 280-300, 302-325, and 331-356; these read AATL…EMSQ, TKLN…ALSS, DTLA…AFQT, SPKL…AIKL, GPTT…AVEG, QGIL…VWRP, LENL…MWLI, and LAKI…VFHA.

Heterotetramer of a catalytic 19 kDa and a non-catalytic 35 kDa subunit.

It localises to the secreted. Functionally, non-catalytic subunit of oplophorus-luciferin 2-monooxygenase. May stabilize the active conformation of the catalytic subunit. This Oplophorus gracilirostris (Luminous shrimp) protein is Oplophorus-luciferin 2-monooxygenase non-catalytic subunit.